The chain runs to 213 residues: Pyridoxine/pyridoxamine 5'-phosphate oxidase (213 aa).

Residues 60–65, 75–76, Lys-82, and Gln-104 contribute to the FMN site; these read RMVLMK and YS. A substrate-binding site is contributed by Lys-65. The substrate site is built by Tyr-122 and Arg-126. FMN is bound by residues 139-140 and Trp-184; that span reads QS. 190–192 serves as a coordination point for substrate; sequence RLH. Arg-194 lines the FMN pocket.

Belongs to the pyridoxamine 5'-phosphate oxidase family. In terms of assembly, homodimer. FMN is required as a cofactor.

It catalyses the reaction pyridoxamine 5'-phosphate + O2 + H2O = pyridoxal 5'-phosphate + H2O2 + NH4(+). The enzyme catalyses pyridoxine 5'-phosphate + O2 = pyridoxal 5'-phosphate + H2O2. It functions in the pathway cofactor metabolism; pyridoxal 5'-phosphate salvage; pyridoxal 5'-phosphate from pyridoxamine 5'-phosphate: step 1/1. The protein operates within cofactor metabolism; pyridoxal 5'-phosphate salvage; pyridoxal 5'-phosphate from pyridoxine 5'-phosphate: step 1/1. Functionally, catalyzes the oxidation of either pyridoxine 5'-phosphate (PNP) or pyridoxamine 5'-phosphate (PMP) into pyridoxal 5'-phosphate (PLP). In Nitrobacter winogradskyi (strain ATCC 25391 / DSM 10237 / CIP 104748 / NCIMB 11846 / Nb-255), this protein is Pyridoxine/pyridoxamine 5'-phosphate oxidase.